Here is a 583-residue protein sequence, read N- to C-terminus: Aspartyl protease APCB1 (583 aa).

Residues 83 to 103 (LVLGLLGISLLAVAFYASVFP) form a helical membrane-spanning segment. One can recognise a Peptidase A1 domain in the interval 203-564 (YYTRILVGKP…DNVKRRIGWM (362 aa)). Residues D223 and D431 contribute to the active site.

It belongs to the peptidase A1 family. Interacts with BAG6 and BAGP1.

The protein resides in the membrane. Its function is as follows. Involved in proteolytic processing of BAG6 and plant basal immunity. The chain is Aspartyl protease APCB1 from Arabidopsis thaliana (Mouse-ear cress).